Here is a 327-residue protein sequence, read N- to C-terminus: MSKTIQANNIEALGNAMDLALERDPNVVLYGQDAGFEGGVFRATKGLQKKYGEERVWDCPIAEAAMAGIGVGAAIGGLKPIVEIQFSGFSFPAMFQIFTHAARIRNRSRGVYTCPIIVRMPMGGGIKALEHHSETLEAIYGQIAGLKTVMPSNPYDTKGLFLAAVESPDPVVFFEPKKLYRAFRQEIPADYYTVPIGQANLISQGNNLTIVSYGPTMFDLINMVYGGELKDKGIELIDLRTISPWDKETVFNSVKKTGRLLVVTEAAKTFTTSGEIIASVTEELFSYLKAAPQRVTGWDIVVPLARGEHYQFNLNARILEAVNQLLK.

Glu63 contacts thiamine diphosphate.

As to quaternary structure, heterodimer of an alpha and a beta chain. Thiamine diphosphate serves as cofactor.

It carries out the reaction N(6)-[(R)-lipoyl]-L-lysyl-[protein] + pyruvate + H(+) = N(6)-[(R)-S(8)-acetyldihydrolipoyl]-L-lysyl-[protein] + CO2. Functionally, the pyruvate dehydrogenase complex catalyzes the overall conversion of pyruvate to acetyl-CoA and CO(2). It contains multiple copies of three enzymatic components: pyruvate dehydrogenase (E1), dihydrolipoamide acetyltransferase (E2) and lipoamide dehydrogenase (E3). This Mycoplasma pneumoniae (strain ATCC 29342 / M129 / Subtype 1) (Mycoplasmoides pneumoniae) protein is Pyruvate dehydrogenase E1 component subunit beta (pdhB).